We begin with the raw amino-acid sequence, 533 residues long: Glycoprotein (533 aa).

Residues 1–19 (MPLNAVIFTLLLRCSICLG) form the signal peptide. At 20-459 (KFPFYTIPDK…DLGLPEWKRY (440 aa)) the chain is on the virion surface side. The helical transmembrane segment at 460-480 (FLIGVSAVALLALSIIIAVCC) threads the bilayer. Cys-480 carries S-palmitoyl cysteine; by host lipidation. The Intravirion segment spans residues 481 to 533 (KRFRKRKKSKPGPVELTRKVSVISKGNGPVPSWESYKEGTTGDVRNTTPSTRE). The tract at residues 492–533 (GPVELTRKVSVISKGNGPVPSWESYKEGTTGDVRNTTPSTRE) is disordered. Residues 523-533 (DVRNTTPSTRE) show a composition bias toward polar residues.

The protein belongs to the lyssavirus glycoprotein family. As to quaternary structure, homotrimer. Interacts with matrix protein. Post-translationally, glycosylated and palmitoylated by host. Glycosylation is crucial for glycoprotein export at the cell surface.

Its subcellular location is the virion membrane. Its function is as follows. Attaches the virus to host cellular receptor, inducing endocytosis of the virion. In the endosome, the acidic pH induces conformational changes in the glycoprotein trimer, which trigger fusion between virus and cell membrane. In Duvenhage virus (DUVV), this protein is Glycoprotein (G).